The sequence spans 119 residues: T cell receptor alpha variable 29/delta variable 5 (119 aa).

A signal peptide spans 1 to 21 (MAMLLGASVLILWLQPDWVNS). Positions 22–119 (QQKNDDQQVK…DSAVYFCAAS (98 aa)) constitute an Ig-like domain. Cys-49 and Cys-116 are disulfide-bonded. Asn-93 is a glycosylation site (N-linked (GlcNAc...) asparagine).

Alpha-beta TR is a heterodimer composed of an alpha and beta chain; disulfide-linked. The alpha-beta TR is associated with the transmembrane signaling CD3 coreceptor proteins to form the TR-CD3 (TcR or TCR). The assembly of alpha-beta TR heterodimers with CD3 occurs in the endoplasmic reticulum where a single alpha-beta TR heterodimer associates with one CD3D-CD3E heterodimer, one CD3G-CD3E heterodimer and one CD247 homodimer forming a stable octameric structure. CD3D-CD3E and CD3G-CD3E heterodimers preferentially associate with TR alpha and TR beta chains, respectively. The association of the CD247 homodimer is the last step of TcR assembly in the endoplasmic reticulum and is required for transport to the cell surface.

The protein resides in the cell membrane. Functionally, v region of the variable domain of T cell receptor (TR) alpha chain that participates in the antigen recognition. Alpha-beta T cell receptors are antigen specific receptors which are essential to the immune response and are present on the cell surface of T lymphocytes. Recognize peptide-major histocompatibility (MH) (pMH) complexes that are displayed by antigen presenting cells (APC), a prerequisite for efficient T cell adaptive immunity against pathogens. Binding of alpha-beta TR to pMH complex initiates TR-CD3 clustering on the cell surface and intracellular activation of LCK that phosphorylates the ITAM motifs of CD3G, CD3D, CD3E and CD247 enabling the recruitment of ZAP70. In turn ZAP70 phosphorylates LAT, which recruits numerous signaling molecules to form the LAT signalosome. The LAT signalosome propagates signal branching to three major signaling pathways, the calcium, the mitogen-activated protein kinase (MAPK) kinase and the nuclear factor NF-kappa-B (NF-kB) pathways, leading to the mobilization of transcription factors that are critical for gene expression and essential for T cell growth and differentiation. The T cell repertoire is generated in the thymus, by V-(D)-J rearrangement. This repertoire is then shaped by intrathymic selection events to generate a peripheral T cell pool of self-MH restricted, non-autoaggressive T cells. Post-thymic interaction of alpha-beta TR with the pMH complexes shapes TR structural and functional avidity. This chain is T cell receptor alpha variable 29/delta variable 5, found in Homo sapiens (Human).